The primary structure comprises 193 residues: Phosphoheptose isomerase (193 aa).

The region spanning 37-193 (LADSFKAGGK…QLIEKEMVKA (157 aa)) is the SIS domain. 52–54 (NGG) serves as a coordination point for substrate. Residues His-61 and Glu-65 each coordinate Zn(2+). Substrate is bound by residues Glu-65, 93–94 (ND), 119–121 (STS), Ser-124, and Gln-172. The Zn(2+) site is built by Gln-172 and His-180.

It belongs to the SIS family. GmhA subfamily. As to quaternary structure, homotetramer. Zn(2+) serves as cofactor.

Its subcellular location is the cytoplasm. The enzyme catalyses 2 D-sedoheptulose 7-phosphate = D-glycero-alpha-D-manno-heptose 7-phosphate + D-glycero-beta-D-manno-heptose 7-phosphate. It functions in the pathway carbohydrate biosynthesis; D-glycero-D-manno-heptose 7-phosphate biosynthesis; D-glycero-alpha-D-manno-heptose 7-phosphate and D-glycero-beta-D-manno-heptose 7-phosphate from sedoheptulose 7-phosphate: step 1/1. Its function is as follows. Catalyzes the isomerization of sedoheptulose 7-phosphate in D-glycero-D-manno-heptose 7-phosphate. The polypeptide is Phosphoheptose isomerase (Yersinia enterocolitica serotype O:8 / biotype 1B (strain NCTC 13174 / 8081)).